The sequence spans 392 residues: Dual-specificity RNA methyltransferase RlmN (392 aa).

The active-site Proton acceptor is Glu-116. In terms of domain architecture, Radical SAM core spans 122–364 (EEGRGTLCVS…SPIRTPRGED (243 aa)). A disulfide bridge links Cys-129 with Cys-369. Residues Cys-136, Cys-140, and Cys-143 each contribute to the [4Fe-4S] cluster site. S-adenosyl-L-methionine-binding positions include 195-196 (GE), Ser-227, 249-251 (SFH), and Asn-326. The active-site S-methylcysteine intermediate is the Cys-369.

The protein belongs to the radical SAM superfamily. RlmN family. The cofactor is [4Fe-4S] cluster.

It is found in the cytoplasm. The catalysed reaction is adenosine(2503) in 23S rRNA + 2 reduced [2Fe-2S]-[ferredoxin] + 2 S-adenosyl-L-methionine = 2-methyladenosine(2503) in 23S rRNA + 5'-deoxyadenosine + L-methionine + 2 oxidized [2Fe-2S]-[ferredoxin] + S-adenosyl-L-homocysteine. It catalyses the reaction adenosine(37) in tRNA + 2 reduced [2Fe-2S]-[ferredoxin] + 2 S-adenosyl-L-methionine = 2-methyladenosine(37) in tRNA + 5'-deoxyadenosine + L-methionine + 2 oxidized [2Fe-2S]-[ferredoxin] + S-adenosyl-L-homocysteine. In terms of biological role, specifically methylates position 2 of adenine 2503 in 23S rRNA and position 2 of adenine 37 in tRNAs. m2A2503 modification seems to play a crucial role in the proofreading step occurring at the peptidyl transferase center and thus would serve to optimize ribosomal fidelity. This Cereibacter sphaeroides (strain ATCC 17025 / ATH 2.4.3) (Rhodobacter sphaeroides) protein is Dual-specificity RNA methyltransferase RlmN.